The following is a 351-amino-acid chain: Histidinol-phosphate aminotransferase (351 aa).

The residue at position 214 (Lys-214) is an N6-(pyridoxal phosphate)lysine.

It belongs to the class-II pyridoxal-phosphate-dependent aminotransferase family. Histidinol-phosphate aminotransferase subfamily. The cofactor is pyridoxal 5'-phosphate.

It catalyses the reaction L-histidinol phosphate + 2-oxoglutarate = 3-(imidazol-4-yl)-2-oxopropyl phosphate + L-glutamate. It participates in amino-acid biosynthesis; L-histidine biosynthesis; L-histidine from 5-phospho-alpha-D-ribose 1-diphosphate: step 7/9. The sequence is that of Histidinol-phosphate aminotransferase from Methanosphaerula palustris (strain ATCC BAA-1556 / DSM 19958 / E1-9c).